The chain runs to 697 residues: Testis-specific gene 10 protein (697 aa).

The tract at residues 556-688 (QMTNERISMQ…SPDRGLDRSL (133 aa)) is interaction with HIF1A. Residues 656 to 684 (NAYNLGPMKPNTKCHSPERAHHRSPDRGL) form a disordered region. Positions 670–684 (HSPERAHHRSPDRGL) are enriched in basic and acidic residues. The residue at position 687 (Ser687) is a Phosphoserine.

Belongs to the CEP135/TSGA10 family. As to quaternary structure, interacts with HIF1A. Post-translationally, processed into N-terminal 27-kDa and C-terminal 55-kDa fragments. Predominantly expressed in testis, in spermatozoa (at protein level). Not detected in Leydig cells. The N-terminal 27-kDa fragment is also detected in liver, while the C-terminal 55-kDa fragment is also found retina, brain and kidney (at protein level).

The protein resides in the cytoplasm. The protein localises to the cytoskeleton. Its subcellular location is the microtubule organizing center. It is found in the centrosome. It localises to the centriole. In terms of biological role, plays a role in spermatogenesis. When overexpressed, prevents nuclear localization of HIF1A. The polypeptide is Testis-specific gene 10 protein (Tsga10) (Mus musculus (Mouse)).